The following is a 257-amino-acid chain: Aspartate/glutamate leucyltransferase (257 aa).

It belongs to the R-transferase family. Bpt subfamily.

It is found in the cytoplasm. It carries out the reaction N-terminal L-glutamyl-[protein] + L-leucyl-tRNA(Leu) = N-terminal L-leucyl-L-glutamyl-[protein] + tRNA(Leu) + H(+). The catalysed reaction is N-terminal L-aspartyl-[protein] + L-leucyl-tRNA(Leu) = N-terminal L-leucyl-L-aspartyl-[protein] + tRNA(Leu) + H(+). Functions in the N-end rule pathway of protein degradation where it conjugates Leu from its aminoacyl-tRNA to the N-termini of proteins containing an N-terminal aspartate or glutamate. In Sphingopyxis alaskensis (strain DSM 13593 / LMG 18877 / RB2256) (Sphingomonas alaskensis), this protein is Aspartate/glutamate leucyltransferase.